The chain runs to 213 residues: MGQKINPTGLRVGIIKDWESKWYAGKDYADLLHEDIKIREYLENRLSTAAVSSIEIERAANRVNITIHTGKPGMVIGKGGSEVEALRKSLNNLTGKRVHINIVEIKKVDLDATLVADSIARQLENRISFRRAQKQAIQRAMRGGAKGIKTQVSGRLGGADIARAEHYSEGTVPLHTLRADIDYGTAEADTTYGKLGVKVWIYRGEVLPTKTDK.

The KH type-2 domain occupies 38 to 106 (IREYLENRLS…RVHINIVEIK (69 aa)).

The protein belongs to the universal ribosomal protein uS3 family. Part of the 30S ribosomal subunit. Forms a tight complex with proteins S10 and S14.

In terms of biological role, binds the lower part of the 30S subunit head. Binds mRNA in the 70S ribosome, positioning it for translation. This is Small ribosomal subunit protein uS3 from Oceanobacillus iheyensis (strain DSM 14371 / CIP 107618 / JCM 11309 / KCTC 3954 / HTE831).